Reading from the N-terminus, the 200-residue chain is Serotonin N-acetyltransferase 2, chloroplastic (200 aa).

The N-terminal 41 residues, 1 to 41, are a transit peptide targeting the chloroplast; that stretch reads MQMQAARPRVGVRPRGGIRPFPLPTLSFNNNSNRSACACAC. The N-acetyltransferase domain occupies 55–195; that stretch reads FAVRRSSTGL…MAFYRSRQQI (141 aa).

The protein localises to the cytoplasm. It is found in the plastid. Its subcellular location is the chloroplast. It catalyses the reaction serotonin + acetyl-CoA = N-acetylserotonin + CoA + H(+). It carries out the reaction tyramine + acetyl-CoA = N-acetyltyramine + CoA + H(+). The enzyme catalyses tryptamine + acetyl-CoA = N-acetyltryptamine + CoA + H(+). The catalysed reaction is 5-methoxytryptamine + acetyl-CoA = melatonin + CoA + H(+). Its pathway is aromatic compound metabolism; melatonin biosynthesis; melatonin from serotonin: step 1/2. Functionally, catalyzes the N-acetylation of serotonin into N-acetylserotonin, the penultimate step in the synthesis of melatonin. Catalyzes in vitro the N-acetylation of tryptamine to produce N-acetyltryptamine, 5-methoxytryptamine to produce melatonin and tyramine to produce N-acetyltyramine. The protein is Serotonin N-acetyltransferase 2, chloroplastic of Oryza sativa subsp. japonica (Rice).